Reading from the N-terminus, the 132-residue chain is Holo-[acyl-carrier-protein] synthase (132 aa).

Mg(2+)-binding residues include aspartate 13 and glutamate 63.

The protein belongs to the P-Pant transferase superfamily. AcpS family. Requires Mg(2+) as cofactor.

It is found in the cytoplasm. The enzyme catalyses apo-[ACP] + CoA = holo-[ACP] + adenosine 3',5'-bisphosphate + H(+). Functionally, transfers the 4'-phosphopantetheine moiety from coenzyme A to a Ser of acyl-carrier-protein. The sequence is that of Holo-[acyl-carrier-protein] synthase from Gloeobacter violaceus (strain ATCC 29082 / PCC 7421).